A 217-amino-acid chain; its full sequence is Glycine betaine/carnitine/choline transport system permease protein OpuCB (217 aa).

Residues Thr19–Leu198 enclose the ABC transmembrane type-1 domain. A run of 6 helical transmembrane segments spans residues Leu23–Ala43, Gly52–Ile74, Ala84–Tyr101, Leu128–Tyr148, Ile150–Ile170, and Ile180–Val200.

This sequence belongs to the binding-protein-dependent transport system permease family. CysTW subfamily. The complex is composed of two ATP-binding proteins (OpuCA), two transmembrane proteins (OpuCB and OpuCD) and a solute-binding protein (OpuCC).

The protein localises to the cell membrane. In terms of biological role, involved in a high affinity multicomponent binding-protein-dependent transport system for glycine betaine, carnitine and choline; probably responsible for the translocation of the substrate across the membrane. In Bacillus subtilis (strain 168), this protein is Glycine betaine/carnitine/choline transport system permease protein OpuCB (opuCB).